A 358-amino-acid chain; its full sequence is Heme A synthase (358 aa).

Transmembrane regions (helical) follow at residues 22–42 (IQVW…VGGA), 107–127 (VLGR…WATK), 133–153 (ILFP…IGWW), 172–192 (LAFH…LSRG), 208–228 (FAAW…LVAG), 269–289 (FIHR…AFYV), 302–322 (AFLI…TLLH), and 324–344 (VPIS…CFAV). Position 271 (H271) interacts with heme. Heme is bound at residue H332.

Belongs to the COX15/CtaA family. Type 2 subfamily. In terms of assembly, interacts with CtaB. The cofactor is heme b.

Its subcellular location is the cell membrane. It carries out the reaction Fe(II)-heme o + 2 A + H2O = Fe(II)-heme a + 2 AH2. Its pathway is porphyrin-containing compound metabolism; heme A biosynthesis; heme A from heme O: step 1/1. Its function is as follows. Catalyzes the conversion of heme O to heme A by two successive hydroxylations of the methyl group at C8. The first hydroxylation forms heme I, the second hydroxylation results in an unstable dihydroxymethyl group, which spontaneously dehydrates, resulting in the formyl group of heme A. This chain is Heme A synthase, found in Bartonella tribocorum (strain CIP 105476 / IBS 506).